The chain runs to 361 residues: UDP-N-acetylglucosamine--N-acetylmuramyl-(pentapeptide) pyrophosphoryl-undecaprenol N-acetylglucosamine transferase (361 aa).

UDP-N-acetyl-alpha-D-glucosamine-binding positions include threonine 12–glycine 14, asparagine 123, arginine 166, serine 192, and glutamine 293.

The protein belongs to the glycosyltransferase 28 family. MurG subfamily.

The protein localises to the cell inner membrane. The enzyme catalyses di-trans,octa-cis-undecaprenyl diphospho-N-acetyl-alpha-D-muramoyl-L-alanyl-D-glutamyl-meso-2,6-diaminopimeloyl-D-alanyl-D-alanine + UDP-N-acetyl-alpha-D-glucosamine = di-trans,octa-cis-undecaprenyl diphospho-[N-acetyl-alpha-D-glucosaminyl-(1-&gt;4)]-N-acetyl-alpha-D-muramoyl-L-alanyl-D-glutamyl-meso-2,6-diaminopimeloyl-D-alanyl-D-alanine + UDP + H(+). The protein operates within cell wall biogenesis; peptidoglycan biosynthesis. In terms of biological role, cell wall formation. Catalyzes the transfer of a GlcNAc subunit on undecaprenyl-pyrophosphoryl-MurNAc-pentapeptide (lipid intermediate I) to form undecaprenyl-pyrophosphoryl-MurNAc-(pentapeptide)GlcNAc (lipid intermediate II). The polypeptide is UDP-N-acetylglucosamine--N-acetylmuramyl-(pentapeptide) pyrophosphoryl-undecaprenol N-acetylglucosamine transferase (Caulobacter vibrioides (strain ATCC 19089 / CIP 103742 / CB 15) (Caulobacter crescentus)).